Consider the following 500-residue polypeptide: Glycogen synthase (500 aa).

Lysine 20 is a binding site for ADP-alpha-D-glucose.

The protein belongs to the glycosyltransferase 1 family. Bacterial/plant glycogen synthase subfamily.

It carries out the reaction [(1-&gt;4)-alpha-D-glucosyl](n) + ADP-alpha-D-glucose = [(1-&gt;4)-alpha-D-glucosyl](n+1) + ADP + H(+). It functions in the pathway glycan biosynthesis; glycogen biosynthesis. Synthesizes alpha-1,4-glucan chains using ADP-glucose. This is Glycogen synthase from Desulforudis audaxviator (strain MP104C).